Here is a 640-residue protein sequence, read N- to C-terminus: (Z)-beta-ocimene synthase TPS13PK, chloroplastic (640 aa).

A chloroplast-targeting transit peptide spans 1 to 95 (MAALVSTVSS…PFKDEAYVKR (95 aa)). The segment at 50–69 (MSTNNNNNNNQKNSSRRSAN) is disordered. Residues 60–69 (QKNSSRRSAN) are compositionally biased toward polar residues. (2E)-geranyl diphosphate is bound by residues Arg334, Asp371, Asp375, Arg515, and Asp518. Residues Asp371 and Asp375 each contribute to the Mg(2+) site. A DDXXD motif motif is present at residues 371–375 (DDIYD). Residues Asp518, Thr522, and Glu526 each coordinate Mg(2+).

Belongs to the terpene synthase family. In terms of assembly, monomer. Mg(2+) serves as cofactor.

It localises to the plastid. The protein localises to the chloroplast. It catalyses the reaction (2E)-geranyl diphosphate = (Z)-beta-ocimene + diphosphate. It functions in the pathway secondary metabolite biosynthesis; terpenoid biosynthesis. In terms of biological role, involved in monoterpene (C10) olefins biosynthesis, constituants of cannabinoids and terpenoids-rich resins. Catalyzes mainly the conversion of (2E)-geranyl diphosphate to (Z)-beta-ocimene. The protein is (Z)-beta-ocimene synthase TPS13PK, chloroplastic of Cannabis sativa (Hemp).